Consider the following 278-residue polypeptide: Bis(5'-nucleosyl)-tetraphosphatase, symmetrical (278 aa).

This sequence belongs to the Ap4A hydrolase family.

The enzyme catalyses P(1),P(4)-bis(5'-adenosyl) tetraphosphate + H2O = 2 ADP + 2 H(+). In terms of biological role, hydrolyzes diadenosine 5',5'''-P1,P4-tetraphosphate to yield ADP. The protein is Bis(5'-nucleosyl)-tetraphosphatase, symmetrical of Buchnera aphidicola subsp. Baizongia pistaciae (strain Bp).